Reading from the N-terminus, the 270-residue chain is tRNA pseudouridine synthase B (270 aa).

D49 functions as the Nucleophile in the catalytic mechanism.

It belongs to the pseudouridine synthase TruB family. Type 1 subfamily.

It catalyses the reaction uridine(55) in tRNA = pseudouridine(55) in tRNA. Its function is as follows. Responsible for synthesis of pseudouridine from uracil-55 in the psi GC loop of transfer RNAs. This chain is tRNA pseudouridine synthase B, found in Bartonella quintana (strain Toulouse) (Rochalimaea quintana).